The chain runs to 205 residues: Protein TON_1965 (205 aa).

The 195-residue stretch at 7–201 folds into the AMMECR1 domain; it reads EWGEFLVRLA…EEYPKGPVKR (195 aa).

The polypeptide is Protein TON_1965 (Thermococcus onnurineus (strain NA1)).